The chain runs to 274 residues: Nitrogenase iron protein (274 aa).

8–15 (GKGGIGKS) serves as a coordination point for ATP. Position 94 (C94) interacts with [4Fe-4S] cluster. ADP-ribosylarginine; by dinitrogenase reductase ADP-ribosyltransferase is present on R97. Residue C131 participates in [4Fe-4S] cluster binding.

The protein belongs to the NifH/BchL/ChlL family. In terms of assembly, homodimer. It depends on [4Fe-4S] cluster as a cofactor. The reversible ADP-ribosylation of Arg-97 inactivates the nitrogenase reductase and regulates nitrogenase activity.

The enzyme catalyses N2 + 8 reduced [2Fe-2S]-[ferredoxin] + 16 ATP + 16 H2O = H2 + 8 oxidized [2Fe-2S]-[ferredoxin] + 2 NH4(+) + 16 ADP + 16 phosphate + 6 H(+). Its function is as follows. The key enzymatic reactions in nitrogen fixation are catalyzed by the nitrogenase complex, which has 2 components: the iron protein and the molybdenum-iron protein. The sequence is that of Nitrogenase iron protein from Chlorobaculum parvum (strain DSM 263 / NCIMB 8327) (Chlorobium vibrioforme subsp. thiosulfatophilum).